The primary structure comprises 248 residues: NADP-dependent 3-hydroxy acid dehydrogenase YdfG (248 aa).

NADP(+)-binding positions include Gly7–Phe12, Arg32–Arg33, Asp54–Val55, and Asn81. Substrate is bound at residue Ser134. Residues Tyr147, Lys151, and Pro177–Phe185 each bind NADP(+). The active-site Proton acceptor is the Tyr147.

Belongs to the short-chain dehydrogenases/reductases (SDR) family. As to quaternary structure, homotetramer.

The catalysed reaction is 3-hydroxypropanoate + NADP(+) = 3-oxopropanoate + NADPH + H(+). It catalyses the reaction L-allo-threonine + NADP(+) = aminoacetone + CO2 + NADPH. NADP-dependent dehydrogenase with broad substrate specificity acting on 3-hydroxy acids. Catalyzes the NADP-dependent oxidation of L-allo-threonine to L-2-amino-3-keto-butyrate, which is spontaneously decarboxylated into aminoacetone. Also acts on D-threonine, L-serine, D-serine, D-3-hydroxyisobutyrate, L-3-hydroxyisobutyrate, D-glycerate and L-glycerate. Able to catalyze the reduction of the malonic semialdehyde to 3-hydroxypropionic acid. YdfG is apparently supplementing RutE, the presumed malonic semialdehyde reductase involved in pyrimidine degradation since both are able to detoxify malonic semialdehyde. The protein is NADP-dependent 3-hydroxy acid dehydrogenase YdfG of Escherichia coli O6:H1 (strain CFT073 / ATCC 700928 / UPEC).